Reading from the N-terminus, the 609-residue chain is Chaperone protein DnaK (609 aa).

T173 is modified (phosphothreonine; by autocatalysis). The disordered stretch occupies residues 580–609 (QAAQGGGAEGQEPKKDNVVDADYEVVDDKK). The span at 598–609 (VDADYEVVDDKK) shows a compositional bias: acidic residues.

Belongs to the heat shock protein 70 family.

Functionally, acts as a chaperone. This is Chaperone protein DnaK from Brevibacillus brevis (strain 47 / JCM 6285 / NBRC 100599).